Here is a 171-residue protein sequence, read N- to C-terminus: MRAIAILLAVVATIFASLHGVSAIIAVNAEPASSIDSASTHLNFQRRLRQTGDASDEERGNTWFSAKIAKLIEQRKINAMMTKLTKGKSKDEVSKVKQAFQDNVLDELKALVEKGFAPDSFKTALEKLRPGNKGGEDLVAYFTAYWDTFHKAKKLSGVRKQKKRVPHAADV.

The N-terminal stretch at 1–23 (MRAIAILLAVVATIFASLHGVSA) is a signal peptide. A RxLR-dEER motif is present at residues 46–59 (RRLRQTGDASDEER).

This sequence belongs to the RxLR effector family.

It is found in the secreted. It localises to the host cell. Effector that is involved in host plant infection. Contributes to virulence during the early infection stage, by inhibiting plant defense responses induced by both PAMP-triggered immunity (PTI) and effector-triggered immunity (ETI). In Phytophthora infestans (strain T30-4) (Potato late blight agent), this protein is RxLR effector protein CRE7.